The chain runs to 261 residues: Cathepsin G (261 aa).

The signal sequence occupies residues M1–A18. The propeptide at G19–K20 is activation peptide. Residues I21 to R25 are important for antimicrobial activity. Residues I21 to R243 form the Peptidase S1 domain. C49 and C65 are oxidised to a cystine. Catalysis depends on H64, which acts as the Charge relay system. N71 is a glycosylation site (N-linked (GlcNAc...) asparagine). The important for antimicrobial activity stretch occupies residues H97–L111. The active-site Charge relay system is D108. 2 cysteine pairs are disulfide-bonded: C142–C207 and C172–C186. Catalysis depends on S201, which acts as the Charge relay system.

It belongs to the peptidase S1 family. In terms of tissue distribution, in adult, detected only in bone marrow where expression is restricted to a small population of early myeloid cells.

The protein resides in the cell membrane. It is found in the cytoplasmic granule. The protein localises to the secreted. Its subcellular location is the cytoplasm. It localises to the cytosol. The protein resides in the lysosome. It is found in the nucleus. It carries out the reaction Specificity similar to chymotrypsin C.. With respect to regulation, inhibited by chymostatin, phenylmethanesulfonyl fluoride and diisopropyl fluorophosphate. Serine protease with trypsin- and chymotrypsin-like specificity. Also displays antibacterial activity against Gram-negative and Gram-positive bacteria independent of its protease activity. Prefers Phe and Tyr residues in the P1 position of substrates but also cleaves efficiently after Trp and Leu. Shows a preference for negatively charged amino acids in the P2' position and for aliphatic amino acids both upstream and downstream of the cleavage site. Required for recruitment and activation of platelets which is mediated by the F2RL3/PAR4 platelet receptor. Binds reversibly to and stimulates B cells and CD4(+) and CD8(+) T cells. Also binds reversibly to natural killer (NK) cells and enhances NK cell cytotoxicity through its protease activity. Cleaves complement C3. Cleaves vimentin. Cleaves thrombin receptor F2R/PAR1. Cleaves the synovial mucin-type protein PRG4/lubricin. Cleaves and activates IL36G which promotes expression of chemokines CXCL1 and CXLC8 in keratinocytes. Cleaves IL33 into mature forms which have greater activity than the unprocessed form. Cleaves coagulation factor F8 to produce a partially activated form. Also cleaves and activates coagulation factor F10. Cleaves leukocyte cell surface protein SPN/CD43 to release its extracellular domain and trigger its intramembrane proteolysis by gamma-secretase, releasing the CD43 cytoplasmic tail chain (CD43-ct) which translocates to the nucleus. During apoptosis, cleaves SMARCA2/BRM to produce a 160 kDa cleavage product which localizes to the cytosol. Cleaves MBP in B cell lysosomes at '221-Phe-|-Lys-222', degrading the major immunogenic MBP epitope and preventing the activation of MBP-specific autoreactive T cells. Cleaves annexin ANXA1 and antimicrobial peptide CAMP to produce peptides which act on neutrophil N-formyl peptide receptors to enhance the release of CXCL2. Acts as a ligand for the N-formyl peptide receptor FPR1, enhancing phagocyte chemotaxis. Has antibacterial activity against the Gram-negative bacteria N.gonorrhoeae and P.aeruginosa. Likely to act against N.gonorrhoeae by interacting with N.gonorrhoeae penA/PBP2. Exhibits potent antimicrobial activity against the Gram-positive bacterium L.monocytogenes. Has antibacterial activity against the Gram-positive bacterium S.aureus and degrades S.aureus biofilms, allowing polymorphonuclear leukocytes to penetrate the biofilm and phagocytose bacteria. Has antibacterial activity against M.tuberculosis. Induces platelet aggregation which is strongly potentiated in the presence of ELANE. The polypeptide is Cathepsin G (Ctsg) (Mus musculus (Mouse)).